A 196-amino-acid polypeptide reads, in one-letter code: ATP-dependent Clp protease proteolytic subunit (196 aa).

Catalysis depends on Ser-101, which acts as the Nucleophile. His-126 is a catalytic residue.

Belongs to the peptidase S14 family. Component of the chloroplastic Clp protease core complex.

Its subcellular location is the plastid. It localises to the chloroplast stroma. The enzyme catalyses Hydrolysis of proteins to small peptides in the presence of ATP and magnesium. alpha-casein is the usual test substrate. In the absence of ATP, only oligopeptides shorter than five residues are hydrolyzed (such as succinyl-Leu-Tyr-|-NHMec, and Leu-Tyr-Leu-|-Tyr-Trp, in which cleavage of the -Tyr-|-Leu- and -Tyr-|-Trp bonds also occurs).. Its function is as follows. Cleaves peptides in various proteins in a process that requires ATP hydrolysis. Has a chymotrypsin-like activity. Plays a major role in the degradation of misfolded proteins. The chain is ATP-dependent Clp protease proteolytic subunit from Vitis vinifera (Grape).